The sequence spans 356 residues: Probable butyrate kinase (356 aa).

This sequence belongs to the acetokinase family.

It localises to the cytoplasm. The catalysed reaction is butanoate + ATP = butanoyl phosphate + ADP. The polypeptide is Probable butyrate kinase (Clostridium perfringens (strain SM101 / Type A)).